The primary structure comprises 374 residues: Queuine tRNA-ribosyltransferase (374 aa).

The active-site Proton acceptor is D94. Residues 94–98 (DSGGF), D148, Q191, and G218 each bind substrate. The RNA binding stretch occupies residues 249–255 (GVGSPDY). Residue D268 is the Nucleophile of the active site. Positions 273–277 (TRIGR) are RNA binding; important for wobble base 34 recognition. Residues C306, C308, C311, and H337 each contribute to the Zn(2+) site.

It belongs to the queuine tRNA-ribosyltransferase family. Homodimer. Within each dimer, one monomer is responsible for RNA recognition and catalysis, while the other monomer binds to the replacement base PreQ1. The cofactor is Zn(2+).

The enzyme catalyses 7-aminomethyl-7-carbaguanine + guanosine(34) in tRNA = 7-aminomethyl-7-carbaguanosine(34) in tRNA + guanine. Its pathway is tRNA modification; tRNA-queuosine biosynthesis. In terms of biological role, catalyzes the base-exchange of a guanine (G) residue with the queuine precursor 7-aminomethyl-7-deazaguanine (PreQ1) at position 34 (anticodon wobble position) in tRNAs with GU(N) anticodons (tRNA-Asp, -Asn, -His and -Tyr). Catalysis occurs through a double-displacement mechanism. The nucleophile active site attacks the C1' of nucleotide 34 to detach the guanine base from the RNA, forming a covalent enzyme-RNA intermediate. The proton acceptor active site deprotonates the incoming PreQ1, allowing a nucleophilic attack on the C1' of the ribose to form the product. After dissociation, two additional enzymatic reactions on the tRNA convert PreQ1 to queuine (Q), resulting in the hypermodified nucleoside queuosine (7-(((4,5-cis-dihydroxy-2-cyclopenten-1-yl)amino)methyl)-7-deazaguanosine). This is Queuine tRNA-ribosyltransferase from Acetivibrio thermocellus (strain ATCC 27405 / DSM 1237 / JCM 9322 / NBRC 103400 / NCIMB 10682 / NRRL B-4536 / VPI 7372) (Clostridium thermocellum).